A 318-amino-acid polypeptide reads, in one-letter code: Annexin D6 (318 aa).

The residue at position 2 (A2) is an N-acetylalanine. Annexin repeat units follow at residues 11 to 82 (PLPE…LWTL), 83 to 154 (DPTE…PLVS), 168 to 239 (KLAR…TAIK), and 243 to 314 (YPEK…ALLG). Ca(2+) contacts are provided by F24, G26, G28, and E68. A Phosphoserine modification is found at S95. Phosphothreonine is present on residues T100 and T112. At Y129 the chain carries Phosphotyrosine. Positions 256, 258, and 260 each coordinate Ca(2+). Phosphotyrosine is present on Y285. Phosphoserine is present on S290. Ca(2+)-binding residues include D300 and T301.

This sequence belongs to the annexin (TC 1.A.31.1) family. As to expression, expressed in flowers.

The chain is Annexin D6 (ANN6) from Arabidopsis thaliana (Mouse-ear cress).